The sequence spans 140 residues: ATP synthase epsilon chain (140 aa).

This sequence belongs to the ATPase epsilon chain family. F-type ATPases have 2 components, CF(1) - the catalytic core - and CF(0) - the membrane proton channel. CF(1) has five subunits: alpha(3), beta(3), gamma(1), delta(1), epsilon(1). CF(0) has three main subunits: a, b and c.

The protein localises to the cell inner membrane. In terms of biological role, produces ATP from ADP in the presence of a proton gradient across the membrane. The protein is ATP synthase epsilon chain of Legionella pneumophila (strain Paris).